Here is a 59-residue protein sequence, read N- to C-terminus: UPF0434 protein VV1_2087 (59 aa).

The protein belongs to the UPF0434 family.

This is UPF0434 protein VV1_2087 from Vibrio vulnificus (strain CMCP6).